We begin with the raw amino-acid sequence, 325 residues long: Elongation factor P--(R)-beta-lysine ligase (325 aa).

76–78 is a binding site for substrate; sequence SPE. ATP is bound by residues 100–102 and Asn-109; that span reads RNE. Tyr-118 serves as a coordination point for substrate. Residue 244 to 245 participates in ATP binding; it reads EL. A substrate-binding site is contributed by Glu-251. Residue Gly-300 participates in ATP binding.

The protein belongs to the class-II aminoacyl-tRNA synthetase family. EpmA subfamily. In terms of assembly, homodimer.

The catalysed reaction is D-beta-lysine + L-lysyl-[protein] + ATP = N(6)-((3R)-3,6-diaminohexanoyl)-L-lysyl-[protein] + AMP + diphosphate + H(+). Its function is as follows. With EpmB is involved in the beta-lysylation step of the post-translational modification of translation elongation factor P (EF-P). Catalyzes the ATP-dependent activation of (R)-beta-lysine produced by EpmB, forming a lysyl-adenylate, from which the beta-lysyl moiety is then transferred to the epsilon-amino group of a conserved specific lysine residue in EF-P. The polypeptide is Elongation factor P--(R)-beta-lysine ligase (Klebsiella pneumoniae (strain 342)).